The following is a 139-amino-acid chain: Large ribosomal subunit protein uL16 (139 aa).

The segment covering 1–19 (MLIPRRVKYRKQHHPKRTG) has biased composition (basic residues). A disordered region spans residues 1–23 (MLIPRRVKYRKQHHPKRTGAAKG).

This sequence belongs to the universal ribosomal protein uL16 family. In terms of assembly, part of the 50S ribosomal subunit.

Functionally, binds 23S rRNA and is also seen to make contacts with the A and possibly P site tRNAs. The sequence is that of Large ribosomal subunit protein uL16 from Cutibacterium acnes (strain DSM 16379 / KPA171202) (Propionibacterium acnes).